The sequence spans 77 residues: U18-lycotoxin-Ls1a (77 aa).

A signal peptide spans 1–22 (MSPKMQALLLLLGLITLLVVHA). The propeptide occupies 23-34 (EEELSENTESER). Disulfide bonds link Cys36-Cys51, Cys43-Cys56, Cys50-Cys67, and Cys58-Cys65.

The protein belongs to the neurotoxin 02 (plectoxin) family. Expressed by the venom gland.

The protein resides in the secreted. The chain is U18-lycotoxin-Ls1a from Lycosa singoriensis (Wolf spider).